The chain runs to 287 residues: ATP synthase gamma chain (287 aa).

This sequence belongs to the ATPase gamma chain family. As to quaternary structure, F-type ATPases have 2 components, CF(1) - the catalytic core - and CF(0) - the membrane proton channel. CF(1) has five subunits: alpha(3), beta(3), gamma(1), delta(1), epsilon(1). CF(0) has three main subunits: a, b and c.

It is found in the cell membrane. Produces ATP from ADP in the presence of a proton gradient across the membrane. The gamma chain is believed to be important in regulating ATPase activity and the flow of protons through the CF(0) complex. The chain is ATP synthase gamma chain from Brevibacillus brevis (strain 47 / JCM 6285 / NBRC 100599).